The primary structure comprises 1207 residues: DNA-directed RNA polymerase subunit beta' (1207 aa).

The Zn(2+) site is built by cysteine 60, cysteine 62, cysteine 75, and cysteine 78. 3 residues coordinate Mg(2+): aspartate 450, aspartate 452, and aspartate 454. Zn(2+) is bound by residues cysteine 819, cysteine 893, cysteine 900, and cysteine 903.

The protein belongs to the RNA polymerase beta' chain family. In terms of assembly, the RNAP catalytic core consists of 2 alpha, 1 beta, 1 beta' and 1 omega subunit. When a sigma factor is associated with the core the holoenzyme is formed, which can initiate transcription. The cofactor is Mg(2+). Zn(2+) serves as cofactor.

It carries out the reaction RNA(n) + a ribonucleoside 5'-triphosphate = RNA(n+1) + diphosphate. Its function is as follows. DNA-dependent RNA polymerase catalyzes the transcription of DNA into RNA using the four ribonucleoside triphosphates as substrates. The sequence is that of DNA-directed RNA polymerase subunit beta' from Streptococcus pyogenes serotype M3 (strain ATCC BAA-595 / MGAS315).